The sequence spans 337 residues: Ferredoxin--NADP reductase (337 aa).

FAD contacts are provided by aspartate 33, glutamine 41, tyrosine 46, alanine 86, phenylalanine 120, aspartate 286, and threonine 327.

The protein belongs to the ferredoxin--NADP reductase type 2 family. Homodimer. FAD serves as cofactor.

The catalysed reaction is 2 reduced [2Fe-2S]-[ferredoxin] + NADP(+) + H(+) = 2 oxidized [2Fe-2S]-[ferredoxin] + NADPH. The chain is Ferredoxin--NADP reductase from Rickettsia canadensis (strain McKiel).